The primary structure comprises 369 residues: Chaperone protein DnaJ (369 aa).

The region spanning 5–70 (DYYEVLGVGR…NKRAAYDQFG (66 aa)) is the J domain. The CR-type zinc finger occupies 128–206 (GAETQIRIPR…CHGAGWVKRQ (79 aa)). 8 residues coordinate Zn(2+): cysteine 141, cysteine 144, cysteine 158, cysteine 161, cysteine 180, cysteine 183, cysteine 194, and cysteine 197. CXXCXGXG motif repeat units lie at residues 141 to 148 (CDTCHGSG), 158 to 165 (CPTCNGHG), 180 to 187 (CSHCQGSG), and 194 to 201 (CGDCHGAG).

Belongs to the DnaJ family. Homodimer. It depends on Zn(2+) as a cofactor.

It localises to the cytoplasm. Its function is as follows. Participates actively in the response to hyperosmotic and heat shock by preventing the aggregation of stress-denatured proteins and by disaggregating proteins, also in an autonomous, DnaK-independent fashion. Unfolded proteins bind initially to DnaJ; upon interaction with the DnaJ-bound protein, DnaK hydrolyzes its bound ATP, resulting in the formation of a stable complex. GrpE releases ADP from DnaK; ATP binding to DnaK triggers the release of the substrate protein, thus completing the reaction cycle. Several rounds of ATP-dependent interactions between DnaJ, DnaK and GrpE are required for fully efficient folding. Also involved, together with DnaK and GrpE, in the DNA replication of plasmids through activation of initiation proteins. This chain is Chaperone protein DnaJ, found in Nitrosomonas europaea (strain ATCC 19718 / CIP 103999 / KCTC 2705 / NBRC 14298).